The following is a 612-amino-acid chain: Kelch repeat and BTB domain-containing protein 3 (612 aa).

Positions 52–119 (YDFKIIMKDE…AYTGKTKITD (68 aa)) constitute a BTB domain. Residues 150 to 250 (NLVNCLQLLS…VRLHQLSEET (101 aa)) form the BACK domain. Kelch repeat units lie at residues 291-337 (STTE…GSSL), 339-390 (SYGE…STMK), 400-450 (MALD…PEAS), 452-502 (CQNV…ATLI), and 548-595 (GIED…FYCQ).

This is Kelch repeat and BTB domain-containing protein 3 from Pongo abelii (Sumatran orangutan).